A 468-amino-acid polypeptide reads, in one-letter code: Acyltransferase R4 (468 aa).

Helical transmembrane passes span 21 to 41, 70 to 90, 133 to 153, 252 to 272, 308 to 328, 388 to 408, and 423 to 443; these read GILS…LGYD, LFTI…CLFF, LNLL…TGFF, FLAA…PLFW, DPFG…YPTW, FAVY…LFSW, and IGFG…AAMF.

This sequence belongs to the acyltransferase 3 family.

The protein resides in the membrane. It participates in secondary metabolite biosynthesis. In terms of biological role, acyltransferase; part of the gene cluster that mediates the biosynthesis of squalestatin S1 (SQS1, also known as zaragozic acid A), a heavily oxidized fungal polyketide that offers potent cholesterol lowering activity by targeting squalene synthase (SS). SQS1 is composed of a 2,8-dioxobicyclic[3.2.1]octane-3,4,5-tricarboxyclic acid core that is connected to two lipophilic polyketide arms. These initial steps feature the priming of an unusual benzoic acid starter unit onto the highly reducing polyketide synthase pks2, followed by oxaloacetate extension and product release to generate a tricarboxylic acid containing product. The phenylalanine ammonia lyase (PAL) M7 and the acyl-CoA ligase M9 are involved in transforming phenylalanine into benzoyl-CoA. The citrate synthase-like protein R3 is involved in connecting the C-alpha-carbons of the hexaketide chain and oxaloacetate to afford the tricarboxylic acid unit. The potential hydrolytic enzymes, M8 and M10, are in close proximity to pks2 and may participate in product release. On the other side, the tetraketide arm is synthesized by a the squalestatin tetraketide synthase pks1 and enzymatically esterified to the core in the last biosynthetic step, by the acetyltransferase M4. The biosynthesis of the tetraketide must involve 3 rounds of chain extension. After the first and second rounds methyl-transfer occurs, and in all rounds of extension the ketoreductase and dehydratase are active. The enoyl reductase and C-MeT of pks1 are not active in the final round of extension. The acetyltransferase M4 appears to have a broad substrate selectivity for its acyl CoA substrate, allowing the in vitro synthesis of novel squalestatins. The biosynthesis of SQS1 requires several oxidative steps likely performed by oxidoreductases M1, R1 and R2. Finally, in support of the identification of the cluster as being responsible for SQS1 production, the cluster contains a gene encoding a putative squalene synthase (SS) R6, suggesting a likely mechanism for self-resistance. This Phoma sp. (strain ATCC 20986 / MF5453) protein is Acyltransferase R4.